Consider the following 696-residue polypeptide: Lutropin-choriogonadotropic hormone receptor (696 aa).

The signal sequence occupies residues 1 to 27 (MRRRSLALRLLLALLLLPPPLPQTLLG). Residues 28–358 (APCPEPCSCR…AFNPCEDIMG (331 aa)) are Extracellular-facing. Residue Asn99 is glycosylated (N-linked (GlcNAc...) asparagine). LRR repeat units lie at residues 122 to 147 (LPRL…IFSS), 149 to 171 (FNFI…AFQG), 172 to 196 (MNNE…AFNG), 198 to 220 (TLIS…AFRG), 221 to 244 (ARGP…GLES), and 250 to 271 (ATSS…LLDA). 2 N-linked (GlcNAc...) asparagine glycosylation sites follow: Asn174 and Asn195. Residues Asn291, Asn299, and Asn313 are each glycosylated (N-linked (GlcNAc...) asparagine). The residue at position 331 (Tyr331) is a Sulfotyrosine. Residues 359–386 (YDFLRVLIWLINILAIMGNVTVLFVLLT) form a helical membrane-spanning segment. The Cytoplasmic portion of the chain corresponds to 387–395 (SHYKLTVPR). The helical transmembrane segment at 396-418 (FLMCNLSFADFCMGLYLLLIASV) threads the bilayer. The Extracellular portion of the chain corresponds to 419–439 (DAQTKGQYYNHAIDWQTGNGC). A disulfide bridge connects residues Cys439 and Cys514. The helical transmembrane segment at 440 to 462 (SVAGFFTVFASELSVYTLTVITL) threads the bilayer. Residues 463-482 (ERWHTITYAIQLDQKLRLRH) are Cytoplasmic-facing. The chain crosses the membrane as a helical span at residues 483–505 (AIPIMLGGWLFSTLIAMLPLVGV). The Extracellular segment spans residues 506–525 (SSYMKVSICLPMDVETTLSQ). The chain crosses the membrane as a helical span at residues 526–547 (VYILTILILNVVAFIIICACYI). Over 548 to 570 (KIYFAVQNPELMATNKDTKIAKK) the chain is Cytoplasmic. Residues 571 to 594 (MAVLIFTDFTCMAPISFFAISAAL) traverse the membrane as a helical segment. Topologically, residues 595 to 605 (KVPLITVTNSK) are extracellular. The helical transmembrane segment at 606–626 (VLLVLFYPVNSCANPFLYAIF) threads the bilayer. Topologically, residues 627-696 (TKAFRRDFFL…VMDKTCYKDC (70 aa)) are cytoplasmic. 2 S-palmitoyl cysteine lipidation sites follow: Cys643 and Cys644.

This sequence belongs to the G-protein coupled receptor 1 family. FSH/LSH/TSH subfamily. Sulfated.

The protein resides in the cell membrane. In terms of biological role, receptor for lutropin-choriogonadotropic hormone. The activity of this receptor is mediated by G proteins which activate adenylate cyclase. This is Lutropin-choriogonadotropic hormone receptor (LHCGR) from Sus scrofa (Pig).